A 328-amino-acid polypeptide reads, in one-letter code: Malate dehydrogenase (328 aa).

12 to 18 (GAAGQIG) is a binding site for NAD(+). Substrate is bound by residues R95 and R101. Residues N108, Q115, and 132–134 (VGN) contribute to the NAD(+) site. 2 residues coordinate substrate: N134 and R165. Residue H190 is the Proton acceptor of the active site.

Belongs to the LDH/MDH superfamily. MDH type 2 family.

It catalyses the reaction (S)-malate + NAD(+) = oxaloacetate + NADH + H(+). Its function is as follows. Catalyzes the reversible oxidation of malate to oxaloacetate. The sequence is that of Malate dehydrogenase from Paracidovorax citrulli (strain AAC00-1) (Acidovorax citrulli).